Consider the following 388-residue polypeptide: Diphosphomevalonate decarboxylase (388 aa).

Residues 19–22 (YWGK), Arg-74, 153–158 (SGSACR), and Thr-209 each bind (R)-5-diphosphomevalonate. The disordered stretch occupies residues 367–388 (QGPQGSSESLINDKGLPKAVAN).

The protein belongs to the diphosphomevalonate decarboxylase family. Homodimer.

The enzyme catalyses (R)-5-diphosphomevalonate + ATP = isopentenyl diphosphate + ADP + phosphate + CO2. Its pathway is isoprenoid biosynthesis; isopentenyl diphosphate biosynthesis via mevalonate pathway; isopentenyl diphosphate from (R)-mevalonate: step 3/3. Functionally, diphosphomevalonate decarboxylase; part of the second module of ergosterol biosynthesis pathway that includes the middle steps of the pathway. The second module is carried out in the vacuole and involves the formation of farnesyl diphosphate, which is also an important intermediate in the biosynthesis of ubiquinone, dolichol, heme and prenylated proteins. Activity by the mevalonate kinase ERG12 first converts mevalonate into 5-phosphomevalonate. 5-phosphomevalonate is then further converted to 5-diphosphomevalonate by the phosphomevalonate kinase ERG8. The diphosphomevalonate decarboxylase MVD1/ERG19 then produces isopentenyl diphosphate. The isopentenyl-diphosphate delta-isomerase IDI1 then catalyzes the 1,3-allylic rearrangement of the homoallylic substrate isopentenyl (IPP) to its highly electrophilic allylic isomer, dimethylallyl diphosphate (DMAPP). Finally the farnesyl diphosphate synthase ERG20 catalyzes the sequential condensation of isopentenyl pyrophosphate with dimethylallyl pyrophosphate, and then with the resultant geranylpyrophosphate to the ultimate product farnesyl pyrophosphate. In Debaryomyces hansenii (strain ATCC 36239 / CBS 767 / BCRC 21394 / JCM 1990 / NBRC 0083 / IGC 2968) (Yeast), this protein is Diphosphomevalonate decarboxylase.